A 197-amino-acid chain; its full sequence is Molybdenum cofactor guanylyltransferase (197 aa).

Residues 12–14 (LAG), lysine 25, asparagine 53, aspartate 71, and aspartate 101 each bind GTP. Aspartate 101 is a binding site for Mg(2+).

Belongs to the MobA family. In terms of assembly, monomer. It depends on Mg(2+) as a cofactor.

The protein resides in the cytoplasm. It catalyses the reaction Mo-molybdopterin + GTP + H(+) = Mo-molybdopterin guanine dinucleotide + diphosphate. In terms of biological role, transfers a GMP moiety from GTP to Mo-molybdopterin (Mo-MPT) cofactor (Moco or molybdenum cofactor) to form Mo-molybdopterin guanine dinucleotide (Mo-MGD) cofactor. This chain is Molybdenum cofactor guanylyltransferase, found in Bordetella pertussis (strain Tohama I / ATCC BAA-589 / NCTC 13251).